The primary structure comprises 1016 residues: C2 domain-containing protein 5 (1016 aa).

The 109-residue stretch at 1–109 folds into the C2 domain; that stretch reads MPGKLKVKIV…EAATVISGWF (109 aa). Asp19, Asp26, Asp76, Asp78, Ser81, and Asp84 together coordinate Ca(2+). A Phosphoserine; by PKB/AKT2 modification is found at Ser197. Ser200 and Ser260 each carry phosphoserine. Positions 265–330 are disordered; that stretch reads LKEIPFNEDP…SGSAGKEGGP (66 aa). The span at 274–289 shows a compositional bias: polar residues; it reads PNPNTHSSGPSTPLKN. The segment covering 290-318 has biased composition (low complexity); sequence QTYSFSPSKSYSRQSSSSDTDLSLTPKTG. Residues Ser293, Ser295, Ser304, Ser305, and Ser306 each carry the phosphoserine modification. Thr317 carries the phosphothreonine modification. Residues 319–328 show a composition bias toward gly residues; it reads MGSGSAGKEG. Position 323 is a phosphoserine (Ser323). Phosphothreonine is present on Thr601. A disordered region spans residues 636–668; sequence VSEEMIGSPIPEPRQRSRLLRSQSESSDEVTEL. Residues Ser643, Ser657, Ser659, Ser661, and Ser662 each carry the phosphoserine modification. Thr666 carries the phosphothreonine modification. Phosphoserine is present on residues Ser671, Ser817, and Ser869.

Ca(2+) serves as cofactor. Phosphorylated on Ser-197 by active myristoylated kinase AKT2; insulin-stimulated phosphorylation by AKT2 regulates SLC2A4/GLUT4 translocation into the plasma membrane. Expressed in liver, muscle and fat.

It localises to the cytoplasmic vesicle membrane. The protein localises to the cytoplasm. The protein resides in the cell cortex. It is found in the cell membrane. Its subcellular location is the cell projection. It localises to the ruffle. Its function is as follows. Required for insulin-stimulated glucose transport and glucose transporter SLC2A4/GLUT4 translocation from intracellular glucose storage vesicle (GSV) to the plasma membrane (PM) in adipocytes. Binds phospholipid membranes in a calcium-dependent manner and is necessary for the optimal membrane fusion between SLC2A4/GLUT4 GSV and the PM. This chain is C2 domain-containing protein 5 (C2cd5), found in Mus musculus (Mouse).